The primary structure comprises 168 residues: uncharacterized protein (168 aa).

The chain crosses the membrane as a helical span at residues Phe24–Phe44. 2 disordered regions span residues Ser69 to Asn92 and Asn142 to Ile168. The span at Asn142–Asn157 shows a compositional bias: low complexity.

The protein resides in the membrane. This is an uncharacterized protein from Dictyostelium discoideum (Social amoeba).